The sequence spans 72 residues: MSKEDVIQMQGEVIENLPNATFRVKLENGHVLLGHISGKMRMHYIRILPGDKVTVELTPYDLTKGRIVFRAK.

Residues 1 to 72 form the S1-like domain; it reads MSKEDVIQMQ…TKGRIVFRAK (72 aa).

It belongs to the IF-1 family. As to quaternary structure, component of the 30S ribosomal translation pre-initiation complex which assembles on the 30S ribosome in the order IF-2 and IF-3, IF-1 and N-formylmethionyl-tRNA(fMet); mRNA recruitment can occur at any time during PIC assembly.

Its subcellular location is the cytoplasm. In terms of biological role, one of the essential components for the initiation of protein synthesis. Stabilizes the binding of IF-2 and IF-3 on the 30S subunit to which N-formylmethionyl-tRNA(fMet) subsequently binds. Helps modulate mRNA selection, yielding the 30S pre-initiation complex (PIC). Upon addition of the 50S ribosomal subunit IF-1, IF-2 and IF-3 are released leaving the mature 70S translation initiation complex. This is Translation initiation factor IF-1 1 from Thiobacillus denitrificans (strain ATCC 25259 / T1).